Reading from the N-terminus, the 145-residue chain is Protein SprT-like (145 aa).

The 137-residue stretch at 4-140 (TNYVQEVSLA…VCGNCHGKLM (137 aa)) folds into the SprT-like domain. Zn(2+) is bound at residue H64. Residue E65 is part of the active site. Residue H68 coordinates Zn(2+).

This sequence belongs to the SprT family. Zn(2+) is required as a cofactor.

Its subcellular location is the cytoplasm. This is Protein SprT-like from Streptococcus pyogenes serotype M3 (strain SSI-1).